The sequence spans 519 residues: Glucose-1-phosphate adenylyltransferase large subunit 2, chloroplastic/amyloplastic (519 aa).

Belongs to the bacterial/plant glucose-1-phosphate adenylyltransferase family. In terms of assembly, heterotetramer. As to expression, leaves and tubers.

The protein localises to the plastid. Its subcellular location is the chloroplast. It is found in the amyloplast. The enzyme catalyses alpha-D-glucose 1-phosphate + ATP + H(+) = ADP-alpha-D-glucose + diphosphate. Its pathway is glycan biosynthesis; starch biosynthesis. Activated by 3'phosphoglycerate, inhibited by orthophosphate. Allosteric regulation. In terms of biological role, this protein plays a role in synthesis of starch. It catalyzes the synthesis of the activated glycosyl donor, ADP-glucose from Glc-1-P and ATP. In Solanum tuberosum (Potato), this protein is Glucose-1-phosphate adenylyltransferase large subunit 2, chloroplastic/amyloplastic (AGPS2).